The chain runs to 826 residues: Lon protease (826 aa).

The Lon N-terminal domain occupies Leu26–Val221. Gly373–Thr380 lines the ATP pocket. In terms of domain architecture, Lon proteolytic spans Glu609 to Pro790. Catalysis depends on residues Ser696 and Lys739. Positions Leu788–Lys826 are disordered. The segment covering Ala796–Pro816 has biased composition (basic residues).

It belongs to the peptidase S16 family. Homohexamer. Organized in a ring with a central cavity.

It localises to the cytoplasm. It catalyses the reaction Hydrolysis of proteins in presence of ATP.. In terms of biological role, ATP-dependent serine protease that mediates the selective degradation of mutant and abnormal proteins as well as certain short-lived regulatory proteins. Required for cellular homeostasis and for survival from DNA damage and developmental changes induced by stress. Degrades polypeptides processively to yield small peptide fragments that are 5 to 10 amino acids long. Binds to DNA in a double-stranded, site-specific manner. The protein is Lon protease of Desulfatibacillum aliphaticivorans.